Consider the following 620-residue polypeptide: Chaperone protein HscA homolog (620 aa).

It belongs to the heat shock protein 70 family.

In terms of biological role, chaperone involved in the maturation of iron-sulfur cluster-containing proteins. Has a low intrinsic ATPase activity which is markedly stimulated by HscB. This is Chaperone protein HscA homolog from Shewanella sp. (strain MR-7).